A 244-amino-acid chain; its full sequence is DnaJ homolog subfamily C member 4 (244 aa).

Residues 37-102 enclose the J domain; it reads NYYELLGVHP…ESRRNYDHQL (66 aa). The tract at residues 96–127 is disordered; it reads RNYDHQLHSASPPKSSGSTAEPKYTQQTHSSW. Over residues 103–127 the composition is skewed to polar residues; the sequence is HSASPPKSSGSTAEPKYTQQTHSSW. Residues 159 to 178 form a helical membrane-spanning segment; sequence VLGYCLLLMVAGMGLHYVAF. The disordered stretch occupies residues 208–244; sequence RANRARIQQERQQRQQPRAEPSLPPESSRIMPQDTSP.

The protein resides in the membrane. The sequence is that of DnaJ homolog subfamily C member 4 (Dnajc4) from Mus musculus (Mouse).